Reading from the N-terminus, the 360-residue chain is Carbamoyl phosphate synthase small chain (360 aa).

Residues methionine 1–isoleucine 169 form a CPSase region. Serine 46, glycine 220, and glycine 222 together coordinate L-glutamine. The Glutamine amidotransferase type-1 domain occupies asparagine 172–threonine 358. Cysteine 247 serves as the catalytic Nucleophile. Methionine 248, glutamine 251, asparagine 289, glycine 291, and tyrosine 292 together coordinate L-glutamine. Catalysis depends on residues histidine 331 and aspartate 333.

It belongs to the CarA family. Composed of two chains; the small (or glutamine) chain promotes the hydrolysis of glutamine to ammonia, which is used by the large (or ammonia) chain to synthesize carbamoyl phosphate. Tetramer of heterodimers (alpha,beta)4.

It carries out the reaction hydrogencarbonate + L-glutamine + 2 ATP + H2O = carbamoyl phosphate + L-glutamate + 2 ADP + phosphate + 2 H(+). The catalysed reaction is L-glutamine + H2O = L-glutamate + NH4(+). Its pathway is amino-acid biosynthesis; L-arginine biosynthesis; carbamoyl phosphate from bicarbonate: step 1/1. The protein operates within pyrimidine metabolism; UMP biosynthesis via de novo pathway; (S)-dihydroorotate from bicarbonate: step 1/3. In terms of biological role, small subunit of the glutamine-dependent carbamoyl phosphate synthetase (CPSase). CPSase catalyzes the formation of carbamoyl phosphate from the ammonia moiety of glutamine, carbonate, and phosphate donated by ATP, constituting the first step of 2 biosynthetic pathways, one leading to arginine and/or urea and the other to pyrimidine nucleotides. The small subunit (glutamine amidotransferase) binds and cleaves glutamine to supply the large subunit with the substrate ammonia. This is Carbamoyl phosphate synthase small chain from Streptococcus pyogenes serotype M3 (strain SSI-1).